Consider the following 284-residue polypeptide: MNAPPALLRSVLFAPGNRADLIAKLPRSAPDAVVIDLEDAVPGTAEAKAAARPVAHDAARDLIAAAPHLAVFVRVNALHSPYFEDDLSVLTPELSGVVVPKLEMGAEARQVAQMLQERSLPLPILAGLETGAGVWNAREIMEVPEVAWAYFGAEDYTTDLGGKRTPGGLEVLYARSQVALAARLTGVAALDIVVTALNDPETFRADAEQGRALGYSGKLCIHPAQVALAHEYFGPTEADRARARALLDAAAAAAQRGHGAFSFEGQMVDEPMLAKARTLLSHEA.

Positions 74 and 129 each coordinate substrate. 2 residues coordinate Mg(2+): glutamate 129 and aspartate 155.

It belongs to the HpcH/HpaI aldolase family. Citrate lyase beta subunit-like subfamily. In terms of assembly, homotrimer. Mg(2+) is required as a cofactor.

In terms of biological role, may play a role in fatty acid biosynthesis. This is Citrate lyase subunit beta-like protein from Deinococcus radiodurans (strain ATCC 13939 / DSM 20539 / JCM 16871 / CCUG 27074 / LMG 4051 / NBRC 15346 / NCIMB 9279 / VKM B-1422 / R1).